The chain runs to 348 residues: 2-heptyl-4(1H)-quinolone synthase subunit PqsC (348 aa).

Catalysis depends on Cys-129, which acts as the Acyl-thioester intermediate. Residue His-269 is part of the active site.

Belongs to the thiolase-like superfamily. FabH family. In terms of assembly, forms a tight complex with PqsB.

It localises to the cytoplasm. The catalysed reaction is (2-aminobenzoyl)acetate + octanoyl-CoA + H(+) = 2-heptyl-4(1H)-quinolone + CO2 + CoA + H2O. Its activity is regulated as follows. Folding of PqsC and binding of octanoate are promoted by PqsB. Binding of the octanoyl group probably increases the binding affinity of the complex for 2-ABA. Activity of the complex is inhibited by 2-aminoacetophenone (2-AA). In terms of biological role, required for the biosynthesis of the quorum-sensing signaling molecules 2-heptyl-4(1H)-quinolone (HHQ) and 2-heptyl-3-hydroxy-4(1H)-quinolone (Pseudomonas quinolone signal or PQS), which are important for biofilm formation and virulence. The PqsC/PqsB complex catalyzes the condensation of 2-aminobenzoylacetate (2-ABA) and octanoyl-CoA to form HHQ. First, PqsC acquires an octanoyl group from octanoyl-CoA and forms an octanoyl-PqsC intermediate. Then, together with PqsB, it catalyzes the coupling of 2-ABA with the octanoate group, leading to decarboxylation and dehydration, and resulting in closure of the quinoline ring. This Pseudomonas aeruginosa (strain ATCC 15692 / DSM 22644 / CIP 104116 / JCM 14847 / LMG 12228 / 1C / PRS 101 / PAO1) protein is 2-heptyl-4(1H)-quinolone synthase subunit PqsC.